The primary structure comprises 276 residues: Tumor necrosis factor-inducible gene 6 protein (276 aa).

Positions 1 to 17 (MIILIYLFVLVWEEAQG) are cleaved as a signal peptide. The Link domain occupies 36-129 (GVYHREARSG…SERWDAYCYN (94 aa)). Disulfide bonds link C58-C127, C82-C103, and C135-C161. N118 carries an N-linked (GlcNAc...) asparagine glycan. One can recognise a CUB domain in the interval 135–247 (CGGVFTDPKR…GGFQIKYVTV (113 aa)). Positions 183, 191, 232, 234, and 235 each coordinate Ca(2+). A disulfide bond links C188 and C210. An N-linked (GlcNAc...) asparagine glycan is attached at N258.

In terms of assembly, interacts (via Link domain) with inter-alpha-inhibitor (I-alpha-I) component bikunin. Interacts with ITIH2/HC2; this interaction is required for transesterification of the HC to hyaluronan. Interacts (via Link and CUB domains) with ITIH1. Chondroitin sulfate may be required for the stability of the complex. Interacts (via Link domain) with various C-X-C and C-C chemokines including PF4, CXCL8, CXCL11, CXCL12, CCL2, CCL7, CCL19, CCL21, and CCL27; this interaction interferes with chemokine binding to glycosaminoglycans. Interacts (primarily via Link domain) with BMP2; this interaction is inhibited by hyaluronan. Interacts (via both Link and CUB domains) with TNFSF11. Interacts (via CUB domain) with FN1 (via type III repeats 9-14); this interaction enhances fibronectin fibril assembly. TNFAIP6 may act as a bridging molecule between FN1 and THBS1. In terms of tissue distribution, vascular smooth muscle cells.

It localises to the secreted. Its function is as follows. Major regulator of extracellular matrix organization during tissue remodeling. Catalyzes the transfer of a heavy chain (HC) from inter-alpha-inhibitor (I-alpha-I) complex to hyaluronan. Cleaves the ester bond between the C-terminus of the HC and GalNAc residue of the chondroitin sulfate chain in I-alpha-I complex followed by transesterification of the HC to hyaluronan. In the process, potentiates the antiprotease function of I-alpha-I complex through release of free bikunin. Acts as a catalyst in the formation of hyaluronan-HC oligomers and hyaluronan-rich matrix surrounding the cumulus cell-oocyte complex, a necessary step for oocyte fertilization. Assembles hyaluronan in pericellular matrices that serve as platforms for receptor clustering and signaling. Enables binding of hyaluronan deposited on the surface of macrophages to LYVE1 on lymphatic endothelium and facilitates macrophage extravasation. Alters hyaluronan binding to functionally latent CD44 on vascular endothelium, switching CD44 into an active state that supports leukocyte rolling. Modulates the interaction of chemokines with extracellular matrix components and proteoglycans on endothelial cell surface, likely preventing chemokine gradient formation. In a negative feedback mechanism, may limit excessive neutrophil recruitment at inflammatory sites by antagonizing the association of CXCL8 with glycosaminoglycans on vascular endothelium. Has a role in osteogenesis and bone remodeling. Inhibits BMP2-dependent differentiation of mesenchymal stem cell to osteoblasts. Protects against bone erosion during inflammation by inhibiting TNFSF11/RANKL-dependent osteoclast activation. The chain is Tumor necrosis factor-inducible gene 6 protein (TNFAIP6) from Oryctolagus cuniculus (Rabbit).